The primary structure comprises 350 residues: S-adenosylmethionine:tRNA ribosyltransferase-isomerase (350 aa).

Belongs to the QueA family. As to quaternary structure, monomer.

Its subcellular location is the cytoplasm. The catalysed reaction is 7-aminomethyl-7-carbaguanosine(34) in tRNA + S-adenosyl-L-methionine = epoxyqueuosine(34) in tRNA + adenine + L-methionine + 2 H(+). The protein operates within tRNA modification; tRNA-queuosine biosynthesis. Functionally, transfers and isomerizes the ribose moiety from AdoMet to the 7-aminomethyl group of 7-deazaguanine (preQ1-tRNA) to give epoxyqueuosine (oQ-tRNA). This Bacillus cereus (strain 03BB102) protein is S-adenosylmethionine:tRNA ribosyltransferase-isomerase.